Reading from the N-terminus, the 219-residue chain is MLIVINYKTYNESIGNRGLEIAKIAEKVSEESGITIGVAPQFVDLRMIVENVNIPVYAQHIDNINPGSHTGHILAEAIKDCGCKGTLINHSEKRMLLADIEAVINKCKNLGLETIVCTNNINTSKAVAALSPDYIAVEPPELIGTGIPVSKANPEVVEGTVRAVKEINKDVKVLCGAGISKGEDVKAALDLGAEGVLLASGVVKAKNVEEAIRELIKFI.

Asn6–Lys8 is a substrate binding site. Residue His90 is the Electrophile of the active site. Glu138 acts as the Proton acceptor in catalysis. Substrate is bound by residues Ile143, Gly178, and Ala199–Ser200.

This sequence belongs to the triosephosphate isomerase family. Homotetramer; dimer of dimers.

The protein resides in the cytoplasm. The catalysed reaction is D-glyceraldehyde 3-phosphate = dihydroxyacetone phosphate. The protein operates within carbohydrate biosynthesis; gluconeogenesis. Its pathway is carbohydrate degradation; glycolysis; D-glyceraldehyde 3-phosphate from glycerone phosphate: step 1/1. Involved in the gluconeogenesis. Catalyzes stereospecifically the conversion of dihydroxyacetone phosphate (DHAP) to D-glyceraldehyde-3-phosphate (G3P). The protein is Triosephosphate isomerase of Methanocaldococcus jannaschii (strain ATCC 43067 / DSM 2661 / JAL-1 / JCM 10045 / NBRC 100440) (Methanococcus jannaschii).